The primary structure comprises 154 residues: 3-hydroxyacyl-[acyl-carrier-protein] dehydratase FabZ (154 aa).

Histidine 57 is an active-site residue.

This sequence belongs to the thioester dehydratase family. FabZ subfamily.

The protein resides in the cytoplasm. The enzyme catalyses a (3R)-hydroxyacyl-[ACP] = a (2E)-enoyl-[ACP] + H2O. Involved in unsaturated fatty acids biosynthesis. Catalyzes the dehydration of short chain beta-hydroxyacyl-ACPs and long chain saturated and unsaturated beta-hydroxyacyl-ACPs. This is 3-hydroxyacyl-[acyl-carrier-protein] dehydratase FabZ from Sinorhizobium fredii (strain NBRC 101917 / NGR234).